We begin with the raw amino-acid sequence, 159 residues long: Ribonuclease P protein component 2 (159 aa).

The protein belongs to the eukaryotic/archaeal RNase P protein component 2 family. In terms of assembly, consists of a catalytic RNA component and at least 4-5 protein subunits.

The protein localises to the cytoplasm. The catalysed reaction is Endonucleolytic cleavage of RNA, removing 5'-extranucleotides from tRNA precursor.. Functionally, part of ribonuclease P, a protein complex that generates mature tRNA molecules by cleaving their 5'-ends. This chain is Ribonuclease P protein component 2, found in Halorubrum lacusprofundi (strain ATCC 49239 / DSM 5036 / JCM 8891 / ACAM 34).